A 468-amino-acid polypeptide reads, in one-letter code: Glutamate--tRNA ligase (468 aa).

A 'HIGH' region motif is present at residues 10–20 (PSPTGDLHIGG). Residues cysteine 99, cysteine 101, cysteine 126, and aspartate 128 each coordinate Zn(2+). Residues 236–240 (RLSKR) carry the 'KMSKS' region motif. Lysine 239 serves as a coordination point for ATP.

This sequence belongs to the class-I aminoacyl-tRNA synthetase family. Glutamate--tRNA ligase type 1 subfamily. As to quaternary structure, monomer. Zn(2+) serves as cofactor.

It is found in the cytoplasm. The enzyme catalyses tRNA(Glu) + L-glutamate + ATP = L-glutamyl-tRNA(Glu) + AMP + diphosphate. Functionally, catalyzes the attachment of glutamate to tRNA(Glu) in a two-step reaction: glutamate is first activated by ATP to form Glu-AMP and then transferred to the acceptor end of tRNA(Glu). This is Glutamate--tRNA ligase from Syntrophobacter fumaroxidans (strain DSM 10017 / MPOB).